The following is a 486-amino-acid chain: Ribulose bisphosphate carboxylase large chain (486 aa).

Substrate-binding residues include Asn125 and Thr175. The active-site Proton acceptor is the Lys177. A substrate-binding site is contributed by Lys179. Lys203, Asp205, and Glu206 together coordinate Mg(2+). An N6-carboxylysine modification is found at Lys203. His295 acts as the Proton acceptor in catalysis. Residues Arg296, His328, and Ser380 each contribute to the substrate site.

Belongs to the RuBisCO large chain family. Type I subfamily. In terms of assembly, heterohexadecamer of 8 large chains and 8 small chains. It depends on Mg(2+) as a cofactor.

The enzyme catalyses 2 (2R)-3-phosphoglycerate + 2 H(+) = D-ribulose 1,5-bisphosphate + CO2 + H2O. The catalysed reaction is D-ribulose 1,5-bisphosphate + O2 = 2-phosphoglycolate + (2R)-3-phosphoglycerate + 2 H(+). In terms of biological role, ruBisCO catalyzes two reactions: the carboxylation of D-ribulose 1,5-bisphosphate, the primary event in carbon dioxide fixation, as well as the oxidative fragmentation of the pentose substrate. Both reactions occur simultaneously and in competition at the same active site. The polypeptide is Ribulose bisphosphate carboxylase large chain (Cereibacter sphaeroides (Rhodobacter sphaeroides)).